The primary structure comprises 134 residues: Cytochrome b (134 aa).

The next 3 helical transmembrane spans lie at 33–53 (FGSLLGVCLAVQILTGVFLAM), 77–98 (WVLRYLHANGASMFFICLYVHV), and 113–133 (WNVGILLLFAVMATAFMGYVL). Heme b contacts are provided by His83 and His97.

Belongs to the cytochrome b family. In terms of assembly, the cytochrome bc1 complex contains 11 subunits: 3 respiratory subunits (MT-CYB, CYC1 and UQCRFS1), 2 core proteins (UQCRC1 and UQCRC2) and 6 low-molecular weight proteins (UQCRH/QCR6, UQCRB/QCR7, UQCRQ/QCR8, UQCR10/QCR9, UQCR11/QCR10 and a cleavage product of UQCRFS1). This cytochrome bc1 complex then forms a dimer. Heme b is required as a cofactor.

The protein resides in the mitochondrion inner membrane. Component of the ubiquinol-cytochrome c reductase complex (complex III or cytochrome b-c1 complex) that is part of the mitochondrial respiratory chain. The b-c1 complex mediates electron transfer from ubiquinol to cytochrome c. Contributes to the generation of a proton gradient across the mitochondrial membrane that is then used for ATP synthesis. This Anoura caudifer (Hairy-legged long-tongued bat) protein is Cytochrome b (MT-CYB).